The chain runs to 142 residues: Large ribosomal subunit protein uL11 (142 aa).

The protein belongs to the universal ribosomal protein uL11 family. Part of the ribosomal stalk of the 50S ribosomal subunit. Interacts with L10 and the large rRNA to form the base of the stalk. L10 forms an elongated spine to which L12 dimers bind in a sequential fashion forming a multimeric L10(L12)X complex. One or more lysine residues are methylated.

Its function is as follows. Forms part of the ribosomal stalk which helps the ribosome interact with GTP-bound translation factors. The sequence is that of Large ribosomal subunit protein uL11 from Proteus mirabilis (strain HI4320).